The primary structure comprises 148 residues: Lysozyme C (148 aa).

The signal sequence occupies residues 1–18 (MKAVIILGLVLLSVTVQG). The C-type lysozyme domain maps to 19-148 (KIFERCELAR…VSQYVQGCGV (130 aa)). 4 disulfide bridges follow: C24–C146, C48–C134, C83–C99, and C95–C113. Catalysis depends on residues E53 and D71.

This sequence belongs to the glycosyl hydrolase 22 family. As to quaternary structure, monomer.

The catalysed reaction is Hydrolysis of (1-&gt;4)-beta-linkages between N-acetylmuramic acid and N-acetyl-D-glucosamine residues in a peptidoglycan and between N-acetyl-D-glucosamine residues in chitodextrins.. Its function is as follows. Lysozymes have primarily a bacteriolytic function; those in tissues and body fluids are associated with the monocyte-macrophage system and enhance the activity of immunoagents. In Allenopithecus nigroviridis (Allen's swamp monkey), this protein is Lysozyme C (LYZ).